Consider the following 304-residue polypeptide: Oxygen-dependent coproporphyrinogen-III oxidase (304 aa).

Substrate is bound at residue S95. The a divalent metal cation site is built by H99 and H109. The active-site Proton donor is H109. 111–113 serves as a coordination point for substrate; that stretch reads NVR. H148 and H178 together coordinate a divalent metal cation. The important for dimerization stretch occupies residues 243 to 278; sequence YVEFNLVYDRGTLFGLQSGGRTESILMSLPPLVRWR. Substrate is bound at residue 261-263; it reads GGR.

This sequence belongs to the aerobic coproporphyrinogen-III oxidase family. In terms of assembly, homodimer. The cofactor is a divalent metal cation.

It localises to the cytoplasm. The catalysed reaction is coproporphyrinogen III + O2 + 2 H(+) = protoporphyrinogen IX + 2 CO2 + 2 H2O. Its pathway is porphyrin-containing compound metabolism; protoporphyrin-IX biosynthesis; protoporphyrinogen-IX from coproporphyrinogen-III (O2 route): step 1/1. In terms of biological role, involved in the heme biosynthesis. Catalyzes the aerobic oxidative decarboxylation of propionate groups of rings A and B of coproporphyrinogen-III to yield the vinyl groups in protoporphyrinogen-IX. This Thioalkalivibrio sulfidiphilus (strain HL-EbGR7) protein is Oxygen-dependent coproporphyrinogen-III oxidase.